The chain runs to 87 residues: MASSSSLTRSGSVHLDEKWKLSKKDGGASRITRSSSTSSSSFNGKKQGRCAFTRKCARLVKEQRARFYIMRRCVIMLICWRDNYSDS.

The span at 1 to 11 shows a compositional bias: polar residues; sequence MASSSSLTRSG. Residues 1 to 47 form a disordered region; it reads MASSSSLTRSGSVHLDEKWKLSKKDGGASRITRSSSTSSSSFNGKKQ. The segment covering 14-27 has biased composition (basic and acidic residues); sequence HLDEKWKLSKKDGG. Positions 29–41 are enriched in low complexity; sequence SRITRSSSTSSSS. The required for DVL/RTFL small polypeptide activity stretch occupies residues 51–82; that stretch reads AFTRKCARLVKEQRARFYIMRRCVIMLICWRD. Residues 64–80 traverse the membrane as a helical segment; the sequence is RARFYIMRRCVIMLICW. A glycan (N-linked (GlcNAc...) asparagine) is linked at asparagine 83.

It belongs to the DVL/RTFL small polypeptides family.

The protein localises to the cell membrane. Its function is as follows. Small polypeptide acting as a regulatory molecule which coordinates cellular responses required for differentiation, growth and development, probably by restricting polar cell proliferation in lateral organs and coordinating socket cell recruitment and differentiation at trichome sites. In Arabidopsis thaliana (Mouse-ear cress), this protein is Small polypeptide DEVIL 11.